Consider the following 297-residue polypeptide: Thiosulfate sulfurtransferase (297 aa).

At Lys14 the chain carries N6-acetyllysine; alternate. An N6-succinyllysine; alternate modification is found at Lys14. One can recognise a Rhodanese 1 domain in the interval 25 to 143; sequence LGPSLRVLDA…WLKEGHPVTS (119 aa). A glycan (O-linked (GlcNAc) serine) is linked at Ser35. Ser38 is subject to Phosphoserine. Residue Lys136 is modified to N6-acetyllysine; alternate. Residue Lys136 is modified to N6-succinyllysine; alternate. The segment at 144-159 is hinge; sequence EPSRPEPAVFKATLNL. An N6-acetyllysine modification is found at Lys163. Residues 173 to 288 enclose the Rhodanese 2 domain; it reads QSKRFQLVDS…WFRRAPPETR (116 aa). Lys175 is modified (N6-acetyllysine; alternate). The residue at position 175 (Lys175) is an N6-succinyllysine; alternate. Arg187 serves as a coordination point for substrate. N6-acetyllysine; alternate is present on residues Lys219 and Lys224. N6-succinyllysine; alternate occurs at positions 219 and 224. Lys236 carries the N6-acetyllysine modification. An N6-acetyllysine; alternate modification is found at Lys237. Position 237 is an N6-succinyllysine; alternate (Lys237). The Cysteine persulfide intermediate role is filled by Cys248. Lys250 contributes to the substrate binding site.

As to quaternary structure, monomer. As to expression, expressed in numerous tissues.

It localises to the mitochondrion matrix. The enzyme catalyses thiosulfate + hydrogen cyanide = thiocyanate + sulfite + 2 H(+). Together with MRPL18, acts as a mitochondrial import factor for the cytosolic 5S rRNA. Only the nascent unfolded cytoplasmic form is able to bind to the 5S rRNA. Formation of iron-sulfur complexes and cyanide detoxification. The polypeptide is Thiosulfate sulfurtransferase (Tst) (Mus musculus (Mouse)).